The primary structure comprises 237 residues: Class B acid phosphatase (237 aa).

The first 23 residues, 1 to 23 (MKKITLALSAVCLLFTLNHSANA), serve as a signal peptide directing secretion. The active-site Nucleophile is the Asp-69. Mg(2+) is bound by residues Asp-69 and Asp-71. Asp-71 serves as the catalytic Proton donor. Residues 137–138 (TG) and Lys-177 each bind substrate. Asp-192 contributes to the Mg(2+) binding site.

Belongs to the class B bacterial acid phosphatase family. As to quaternary structure, homotetramer. The cofactor is Mg(2+).

It is found in the periplasm. It catalyses the reaction a phosphate monoester + H2O = an alcohol + phosphate. Its activity is regulated as follows. Nucleosides, and particularly 2'-deoxyribonucleosides, are potent inhibitors of the phosphatase activity. The phosphatase activity is also inhibited by inorganic phosphate and EDTA in vitro. In terms of biological role, dephosphorylates several organic phosphate monoesters such as 3'-UMP, 5'-UMP and pNPP. Also has a phosphotransferase activity catalyzing the transfer of low-energy phosphate groups from organic phosphate monoesters to free hydroxyl groups of various organic compounds such as the 2'-, 3-, or 5'-hydroxyls of nucleosides and nucleotides. Also displays significant phosphomutase activity since it is able to catalyze the transfer of the phosphate group of 3'-AMP from the 3'-position both to the 2'- and 5'-positions. One of the physiological functions of the phosphohydrolytic activity of the enzyme is believed to be the scavenging of organic phosphate esters that otherwise cannot pass the cytoplasmic membrane. The sequence is that of Class B acid phosphatase (aphA) from Salmonella typhimurium (strain LT2 / SGSC1412 / ATCC 700720).